A 277-amino-acid chain; its full sequence is MAIEAPVNFAPPERSTVVSTAGDSSTWQPSSLRMHVIRPKSAKGRKRPNLHRPQGMGDGSPSALSSSPPPRSSGSPSNQKPGVCATVSTSQGAPDEMPELLLQQAPTRTASSLNRYPVLPSINRRSLEVGAVDTVASKTSSLQLSSVQALYQEDSSQEDSRTQVCALEKKFIIRTKRQSSSRASNIEEPSDEEPRLLLAVRSPSGQRFVRYFRPSDDLQTVLEVAEQKNKATYQHCSIETMEVPRRRFSDLTKSLQECGILHKSVLGISQEEGEAWP.

Residues 1 to 102 (MAIEAPVNFA…APDEMPELLL (102 aa)) are disordered. The segment covering 16 to 31 (TVVSTAGDSSTWQPSS) has biased composition (polar residues). Over residues 35-50 (HVIRPKSAKGRKRPNL) the composition is skewed to basic residues. Residues 60–77 (SPSALSSSPPPRSSGSPS) show a composition bias toward low complexity. Ser-88 is modified (phosphoserine). The 78-residue stretch at 191 to 268 (DEEPRLLLAV…GILHKSVLGI (78 aa)) folds into the UBX domain.

This sequence belongs to the UBXN10 family. As to quaternary structure, interacts with CLUAP1; the interaction is direct and mediates interaction with the intraflagellar transport complex B (IFT-B). Interacts with VCP; the interaction is direct.

The protein localises to the cell projection. The protein resides in the cilium. VCP/p97-binding protein required for ciliogenesis. Acts as a tethering factor that facilitates recruitment of VCP/p97 to the intraflagellar transport complex B (IFT-B) in cilia. UBX domain-containing proteins act as tethering factors for VCP/p97 and may specify substrate specificity of VCP/p97. The chain is UBX domain-containing protein 10 from Mus musculus (Mouse).